A 447-amino-acid polypeptide reads, in one-letter code: Glutamate--tRNA ligase 2 (447 aa).

The 'HIGH' region signature appears at 9 to 19 (PSPTGYLHIGN). The 'KMSKS' region motif lies at 240-244 (GLSKR). Lys-243 serves as a coordination point for ATP.

It belongs to the class-I aminoacyl-tRNA synthetase family. Glutamate--tRNA ligase type 1 subfamily. In terms of assembly, monomer.

The protein resides in the cytoplasm. It catalyses the reaction tRNA(Glu) + L-glutamate + ATP = L-glutamyl-tRNA(Glu) + AMP + diphosphate. Its function is as follows. Catalyzes the attachment of glutamate to tRNA(Glu) in a two-step reaction: glutamate is first activated by ATP to form Glu-AMP and then transferred to the acceptor end of tRNA(Glu). This chain is Glutamate--tRNA ligase 2, found in Methylobacterium sp. (strain 4-46).